We begin with the raw amino-acid sequence, 156 residues long: SsrA-binding protein (156 aa).

Residues 127 to 156 (GKKKYDKREDLKKKDAKRDVDRAMRDRQKY) are disordered. The span at 132 to 156 (DKREDLKKKDAKRDVDRAMRDRQKY) shows a compositional bias: basic and acidic residues.

It belongs to the SmpB family.

The protein localises to the cytoplasm. Required for rescue of stalled ribosomes mediated by trans-translation. Binds to transfer-messenger RNA (tmRNA), required for stable association of tmRNA with ribosomes. tmRNA and SmpB together mimic tRNA shape, replacing the anticodon stem-loop with SmpB. tmRNA is encoded by the ssrA gene; the 2 termini fold to resemble tRNA(Ala) and it encodes a 'tag peptide', a short internal open reading frame. During trans-translation Ala-aminoacylated tmRNA acts like a tRNA, entering the A-site of stalled ribosomes, displacing the stalled mRNA. The ribosome then switches to translate the ORF on the tmRNA; the nascent peptide is terminated with the 'tag peptide' encoded by the tmRNA and targeted for degradation. The ribosome is freed to recommence translation, which seems to be the essential function of trans-translation. The protein is SsrA-binding protein of Exiguobacterium sp. (strain ATCC BAA-1283 / AT1b).